Consider the following 116-residue polypeptide: Ribosome-binding factor A (116 aa).

This sequence belongs to the RbfA family. In terms of assembly, monomer. Binds 30S ribosomal subunits, but not 50S ribosomal subunits or 70S ribosomes.

Its subcellular location is the cytoplasm. Functionally, one of several proteins that assist in the late maturation steps of the functional core of the 30S ribosomal subunit. Associates with free 30S ribosomal subunits (but not with 30S subunits that are part of 70S ribosomes or polysomes). Required for efficient processing of 16S rRNA. May interact with the 5'-terminal helix region of 16S rRNA. This is Ribosome-binding factor A from Streptococcus sanguinis (strain SK36).